The sequence spans 136 residues: Urease subunit beta (136 aa).

A disordered region spans residues 113 to 136 (NDEYAGVFGDNGAENVNKKGRKRS).

Belongs to the urease beta subunit family. Heterotrimer of UreA (gamma), UreB (beta) and UreC (alpha) subunits. Three heterotrimers associate to form the active enzyme.

Its subcellular location is the cytoplasm. It catalyses the reaction urea + 2 H2O + H(+) = hydrogencarbonate + 2 NH4(+). It functions in the pathway nitrogen metabolism; urea degradation; CO(2) and NH(3) from urea (urease route): step 1/1. The chain is Urease subunit beta from Staphylococcus aureus (strain Newman).